Reading from the N-terminus, the 479-residue chain is Ribosomal RNA small subunit methyltransferase F (479 aa).

Residues 125-131 (AAAPGSK), E149, D176, and D194 contribute to the S-adenosyl-L-methionine site. C247 (nucleophile) is an active-site residue.

The protein belongs to the class I-like SAM-binding methyltransferase superfamily. RsmB/NOP family.

Its subcellular location is the cytoplasm. It catalyses the reaction cytidine(1407) in 16S rRNA + S-adenosyl-L-methionine = 5-methylcytidine(1407) in 16S rRNA + S-adenosyl-L-homocysteine + H(+). Specifically methylates the cytosine at position 1407 (m5C1407) of 16S rRNA. This is Ribosomal RNA small subunit methyltransferase F from Escherichia coli (strain UTI89 / UPEC).